The following is a 410-amino-acid chain: F-box protein At5g36730 (410 aa).

The region spanning 1–46 (MAMSNLPRDLLEEVLSRVPVKSIAAVRSTCKNWNSLTYGQSFTKKL) is the F-box domain.

In Arabidopsis thaliana (Mouse-ear cress), this protein is F-box protein At5g36730.